We begin with the raw amino-acid sequence, 770 residues long: MRGVWPPPVSALLSALGMSTYKRATLDEEDLVDSLSEGDAYPNGLQVNFHSPRSGQRCWAARTQVEKRLVVLVVLLAAGLVACLAALGIQYQTRSPSVCLSEACVSVTSSILSSMDPTVDPCHDFFSYACGGWIKANPVPDGHSRWGTFSNLWEHNQAIIKHLLENSTASVSEAERKAQVYYRACMNETRIEELRAKPLMELIERLGGWNITGPWAKDNFQDTLQVVTAHYRTSPFFSVYVSADSKNSNSNVIQVDQSGLGLPSRDYYLNKTENEKVLTGYLNYMVQLGKLLGGGDEEAIRPQMQQILDFETALANITIPQEKRRDEELIYHKVTAAELQTLAPAINWLPFLNTIFYPVEINESEPIVVYDKEYLEQISTLINTTDRCLLNNYMIWNLVRKTSSFLDQRFQDADEKFMEVMYGTKKTCLPRWKFCVSDTENNLGFALGPMFVKATFAEDSKSIATEIILEIKKAFEESLSTLKWMDEETRKSAKEKADAIYNMIGYPNFIMDPKELDKVFNDYTAVPDLYFENAMRFFNFSWRVTADQLRKAPNRDQWSMTPPMVNAYYSPTKNEIVFPAGILQAPFYTRSSPKALNFGGIGVVVGHELTHAFDDQGREYDKDGNLRPWWKNSSVEAFKRQTECMVEQYSNYSVNGEPVNGRHTLGENIADNGGLKAAYRAYQNWVKKNGAEHSLPTLGLTNNQLFFLGFAQVWCSVRTPESSHEGLITDPHSPSRFRVIGSLSNSKEFSEHFRCPPGSPMNPPHKCEVW.

At 1 to 68 (MRGVWPPPVS…WAARTQVEKR (68 aa)) the chain is on the cytoplasmic side. Threonine 25 carries the phosphothreonine modification. The chain crosses the membrane as a helical; Signal-anchor for type II membrane protein span at residues 69–89 (LVVLVVLLAAGLVACLAALGI). The Extracellular portion of the chain corresponds to 90-770 (QYQTRSPSVC…MNPPHKCEVW (681 aa)). The Peptidase M13 domain maps to 98–770 (VCLSEACVSV…MNPPHKCEVW (673 aa)). 5 disulfides stabilise this stretch: cysteine 99/cysteine 104, cysteine 122/cysteine 755, cysteine 130/cysteine 715, cysteine 185/cysteine 435, and cysteine 644/cysteine 767. Residues asparagine 166, asparagine 187, asparagine 210, asparagine 270, asparagine 316, asparagine 362, asparagine 383, and asparagine 539 are each glycosylated (N-linked (GlcNAc...) asparagine). Histidine 607 contributes to the Zn(2+) binding site. Residue glutamate 608 is part of the active site. A Zn(2+)-binding site is contributed by histidine 611. N-linked (GlcNAc...) asparagine glycosylation is found at asparagine 632 and asparagine 651. Glutamate 667 contributes to the Zn(2+) binding site. The Proton donor role is filled by aspartate 671.

This sequence belongs to the peptidase M13 family. Homodimer; disulfide-linked. Interacts with PPP1R16B. Interacts with TSPAN8; this interaction recruits the endothelin converting enzyme ECE1 to tetraspanin-enriched microdomains and positively modulates its enzymatic activity. Zn(2+) serves as cofactor. In terms of tissue distribution, all isoforms are expressed in umbilical vein endothelial cells, polynuclear neutrophils, fibroblasts, atrium cardiomyocytes and ventricles. Isoforms A, B and C are also expressed in placenta, lung, heart, adrenal gland and phaeochromocytoma; isoforms A and C in liver, testis and small intestine; isoform B, C and D in endothelial cells and umbilical vein smooth muscle cells; isoforms C and D in saphenous vein cells, and isoform C in kidney.

The protein localises to the cell membrane. The enzyme catalyses Hydrolysis of the 21-Trp-|-Val-22 bond in big endothelin to form endothelin 1.. With respect to regulation, inhibited by phosphoramidon. Activated by K49-P1-20, a twenty-residue synthetic peptide shortened from the snake B.asper myotoxin II. Its function is as follows. Converts big endothelin-1 to endothelin-1. The sequence is that of Endothelin-converting enzyme 1 (ECE1) from Homo sapiens (Human).